A 511-amino-acid polypeptide reads, in one-letter code: Protein phosphatase 2C 7 (511 aa).

The first 19 residues, 1 to 19 (MEEISPAVALTLGLANTMC), serve as a signal peptide directing secretion. The PPM-type phosphatase domain maps to 188-501 (LWGTISICGG…DNISIIVIDL (314 aa)). Residues Asp242, Gly243, Asp432, and Asp492 each contribute to the Mn(2+) site.

Belongs to the PP2C family. As to quaternary structure, interacts with PYL13. Requires Mg(2+) as cofactor. Mn(2+) serves as cofactor. In terms of tissue distribution, expressed in seeds.

The catalysed reaction is O-phospho-L-seryl-[protein] + H2O = L-seryl-[protein] + phosphate. The enzyme catalyses O-phospho-L-threonyl-[protein] + H2O = L-threonyl-[protein] + phosphate. Its function is as follows. Key component and repressor of the abscisic acid (ABA) signaling pathway that regulates numerous ABA responses, such as stomatal closure, seed germination and inhibition of vegetative growth. This is Protein phosphatase 2C 7 (HAB2) from Arabidopsis thaliana (Mouse-ear cress).